Reading from the N-terminus, the 219-residue chain is Orotidine 5'-phosphate decarboxylase (219 aa).

Substrate contacts are provided by residues D10, K32, 58-67 (DFKVADIPYT), S113, 163-173 (PGIGAQGGDPY), G186, and R187. K60 functions as the Proton donor in the catalytic mechanism.

Belongs to the OMP decarboxylase family. Type 1 subfamily. In terms of assembly, homodimer.

The catalysed reaction is orotidine 5'-phosphate + H(+) = UMP + CO2. It functions in the pathway pyrimidine metabolism; UMP biosynthesis via de novo pathway; UMP from orotate: step 2/2. Functionally, catalyzes the decarboxylation of orotidine 5'-monophosphate (OMP) to uridine 5'-monophosphate (UMP). In Thermoplasma volcanium (strain ATCC 51530 / DSM 4299 / JCM 9571 / NBRC 15438 / GSS1), this protein is Orotidine 5'-phosphate decarboxylase.